Here is a 380-residue protein sequence, read N- to C-terminus: Queuine tRNA-ribosyltransferase (380 aa).

The active-site Proton acceptor is D96. Substrate is bound by residues 96–100, D150, Q193, and G220; that span reads DSGGF. An RNA binding region spans residues 251 to 257; that stretch reads GVGAPDS. The active-site Nucleophile is the D270. The RNA binding; important for wobble base 34 recognition stretch occupies residues 275-279; it reads TRIAR. Zn(2+)-binding residues include C308, C310, C313, and H339.

Belongs to the queuine tRNA-ribosyltransferase family. As to quaternary structure, homodimer. Within each dimer, one monomer is responsible for RNA recognition and catalysis, while the other monomer binds to the replacement base PreQ1. Zn(2+) serves as cofactor.

It carries out the reaction 7-aminomethyl-7-carbaguanine + guanosine(34) in tRNA = 7-aminomethyl-7-carbaguanosine(34) in tRNA + guanine. It functions in the pathway tRNA modification; tRNA-queuosine biosynthesis. Functionally, catalyzes the base-exchange of a guanine (G) residue with the queuine precursor 7-aminomethyl-7-deazaguanine (PreQ1) at position 34 (anticodon wobble position) in tRNAs with GU(N) anticodons (tRNA-Asp, -Asn, -His and -Tyr). Catalysis occurs through a double-displacement mechanism. The nucleophile active site attacks the C1' of nucleotide 34 to detach the guanine base from the RNA, forming a covalent enzyme-RNA intermediate. The proton acceptor active site deprotonates the incoming PreQ1, allowing a nucleophilic attack on the C1' of the ribose to form the product. After dissociation, two additional enzymatic reactions on the tRNA convert PreQ1 to queuine (Q), resulting in the hypermodified nucleoside queuosine (7-(((4,5-cis-dihydroxy-2-cyclopenten-1-yl)amino)methyl)-7-deazaguanosine). This Streptococcus pyogenes serotype M6 (strain ATCC BAA-946 / MGAS10394) protein is Queuine tRNA-ribosyltransferase.